Here is a 195-residue protein sequence, read N- to C-terminus: Large ribosomal subunit protein eL15 (195 aa).

Residues 174-195 (GHGRLGSAKSRPSIRANGRLRR) are disordered.

This sequence belongs to the eukaryotic ribosomal protein eL15 family.

This is Large ribosomal subunit protein eL15 from Picrophilus torridus (strain ATCC 700027 / DSM 9790 / JCM 10055 / NBRC 100828 / KAW 2/3).